The following is a 117-amino-acid chain: Modulator protein MzrA (117 aa).

Residues 1 to 11 are Cytoplasmic-facing; the sequence is MMTNRRFRKPS. The helical transmembrane segment at 12-29 threads the bilayer; that stretch reads AWRLLLLLLPLVVLLSMS. At 30-117 the chain is on the periplasmic side; it reads SRRLPDEVML…SNGTSPVTRS (88 aa).

Belongs to the MzrA family. As to quaternary structure, interacts with EnvZ.

It is found in the cell inner membrane. Its function is as follows. Modulates the activity of the EnvZ/OmpR two-component regulatory system, probably by directly modulating EnvZ enzymatic activity and increasing stability of phosphorylated OmpR. In Dickeya dadantii (strain 3937) (Erwinia chrysanthemi (strain 3937)), this protein is Modulator protein MzrA.